The primary structure comprises 185 residues: Ribosome-recycling factor (185 aa).

This sequence belongs to the RRF family.

The protein localises to the cytoplasm. In terms of biological role, responsible for the release of ribosomes from messenger RNA at the termination of protein biosynthesis. May increase the efficiency of translation by recycling ribosomes from one round of translation to another. The protein is Ribosome-recycling factor of Dehalococcoides mccartyi (strain CBDB1).